A 72-amino-acid polypeptide reads, in one-letter code: MPKEEVLEFPGIVTELLPNATFRVKLENEHEIIAHTAGRMRKNRIRVLAGDKVLVEMTPYDLTKGRITYRFK.

Residues 1–72 enclose the S1-like domain; it reads MPKEEVLEFP…TKGRITYRFK (72 aa).

It belongs to the IF-1 family. Component of the 30S ribosomal translation pre-initiation complex which assembles on the 30S ribosome in the order IF-2 and IF-3, IF-1 and N-formylmethionyl-tRNA(fMet); mRNA recruitment can occur at any time during PIC assembly.

It localises to the cytoplasm. In terms of biological role, one of the essential components for the initiation of protein synthesis. Stabilizes the binding of IF-2 and IF-3 on the 30S subunit to which N-formylmethionyl-tRNA(fMet) subsequently binds. Helps modulate mRNA selection, yielding the 30S pre-initiation complex (PIC). Upon addition of the 50S ribosomal subunit IF-1, IF-2 and IF-3 are released leaving the mature 70S translation initiation complex. The chain is Translation initiation factor IF-1 from Rhizobium etli (strain ATCC 51251 / DSM 11541 / JCM 21823 / NBRC 15573 / CFN 42).